A 964-amino-acid chain; its full sequence is MTVVLFATEYDTPNIVVNMLSETPTEHHLFPLMIKYKPSNRIEFVLQTQRCPDSTRVRPVFICDARRLSLSEYVSTNTPLPARVICAGIDADATRELYEHLFDRKKDETGHDEENGSAARHLFSNLTSTLKCLVHYNRSAILRYLNNTFLSPTFPSWFLSTYGTHEGTLILTMSYYLFERTYSTIQTTRDYTKCFTADPGRNLFTYINMRDFMATMNGSRFRKQTVLFAVFAKARNARDRCELEYVDAKINAFREESRLAADSCVYYVYLAYRTALCREKFLQYCEHTAYDKNLPDDQQCAAEENYLGRSLDAELISIMNTYFSVEGYFGSYIHVDRAKLSPPHSYRGYDWNTEADTMVGYSSTATNLAISLRKLNSTCESLFSPLPPTLMGLLKLCASDRYVPRAEKSRKRTSGGREKEDETRVCRRNYLLNDTSRPIGPMPVFRVEMPEKRHVFCAVSAENWTRRLLPKDLMKNLPSEYVSDECLTDAVWLREDIAALCEVGEQLYRTRHEMFNENLPVFNFVGDVDLKLREDLQGLSRQEVFDLCRALRRTLIGAWRHLFPEVDPDSHPVFFFKSACPQNAAGAADEAMLYGGGGYDEDDDPRPEHAAAMVDYGDAVRRPPFCVCRRKLGLRVIIPFPPRTAAIGAQTLKRLAGILDHTLCLDRDLVCKLNAISHPGECFDTGIYSHGRSIRMPLMYKLDEASGLILHSRLNPIFIVPAGYRDRPAEFVLQQLCPQNLTHHGRPPQRDGSADQLTEVVLHITDRACADSDGNFLQSRARRAMSSGRLPLGPLLRAHLSLESGQSAPSLPTLVGRGGGGEGGASSDYEEERAVGSDEEEDDDDVENLQAFARRIAWPALLRHTRNHYREEVQQQLEAATVFTAVGRTCVAVKRGLYGRARDFSCLARETYTRQETVQVFLDIRGDQRRNVWATLWSRCFTRRCNSNAKQTHLSLKISLPSQY.

The disordered stretch occupies residues Ser807–Asp844.

Belongs to the herpesviridae DNA primase family. In terms of assembly, associates with the helicase and the primase-associated factor to form the helicase-primase factor.

The protein resides in the host nucleus. In terms of biological role, essential component of the helicase/primase complex. Unwinds the DNA at the replication forks and generates single-stranded DNA for both leading and lagging strand synthesis. The primase initiates primer synthesis and thereby produces large amount of short RNA primers on the lagging strand that the polymerase elongates using dNTPs. This Mus musculus (Mouse) protein is DNA primase (UL70).